We begin with the raw amino-acid sequence, 102 residues long: Small ribosomal subunit protein uS10 (102 aa).

This sequence belongs to the universal ribosomal protein uS10 family. As to quaternary structure, part of the 30S ribosomal subunit.

In terms of biological role, involved in the binding of tRNA to the ribosomes. The polypeptide is Small ribosomal subunit protein uS10 (Clavibacter michiganensis subsp. michiganensis (strain NCPPB 382)).